Consider the following 168-residue polypeptide: Alpha-N-acetylgalactosamine-specific lectin (168 aa).

The signal sequence occupies residues 1–18 (MAFFRALCFVLLVGFAAA). The C-type lectin domain maps to 38 to 163 (YNGNCYRYFG…CSRAFAYVCK (126 aa)). Disulfide bonds link Cys-59/Cys-162 and Cys-136/Cys-154.

As to quaternary structure, monomer, homodimer and homooligomer.

In terms of biological role, alpha-N-acetylgalactosamine-specific lectin. The oligomeric form has Ca(2+)-dependent hemagglutination activity towards sheep erythrocytes. Its hemagglutination activity is inhibited by various monosaccharides, oligosaccharides and glycopeptides, including inhibition by GalNAc, blood group A trisaccharide, Tn antigen, mucin and asialomucin. In Patiria pectinifera (Starfish), this protein is Alpha-N-acetylgalactosamine-specific lectin.